The following is a 140-amino-acid chain: MRTLGLDVGTKTIGIAVSDALGWTAQGLETWRRSDANEQADFEHIASLVKEHEVTTIVIGLPKNMDGSIGPSGERSETFAAELRRYVPCEIVMWDERLTTTAAERMLISADVSRKKRKSVIDKMAAVMILQGYLDRQQLK.

Belongs to the YqgF nuclease family.

Its subcellular location is the cytoplasm. In terms of biological role, could be a nuclease involved in processing of the 5'-end of pre-16S rRNA. This chain is Putative pre-16S rRNA nuclease, found in Halalkalibacterium halodurans (strain ATCC BAA-125 / DSM 18197 / FERM 7344 / JCM 9153 / C-125) (Bacillus halodurans).